The chain runs to 417 residues: Serine protease hepsin (417 aa).

Residues 1–23 lie on the Cytoplasmic side of the membrane; sequence MAQKEGGRTVPCCSRPKVAALTA. The helical; Signal-anchor for type II membrane protein transmembrane segment at 24 to 44 threads the bilayer; it reads GTLLLLTAIGAASWAIVAVLL. The Extracellular segment spans residues 45–417; that stretch reads RSDQEPLYPV…SEASGMVTQL (373 aa). The SRCR domain occupies 54 to 151; the sequence is VQVSSADARL…RGRFLATICQ (98 aa). 8 disulfide bridges follow: cysteine 77/cysteine 140, cysteine 90/cysteine 150, cysteine 119/cysteine 138, cysteine 153/cysteine 277, cysteine 188/cysteine 204, cysteine 291/cysteine 359, cysteine 322/cysteine 338, and cysteine 349/cysteine 381. The N-linked (GlcNAc...) asparagine glycan is linked to asparagine 112. Residues 163–405 form the Peptidase S1 domain; sequence IVGGRDTSLG…FREWIFQAIK (243 aa). Active-site charge relay system residues include histidine 203 and aspartate 257. Catalysis depends on serine 353, which acts as the Charge relay system.

It belongs to the peptidase S1 family.

The protein localises to the membrane. It carries out the reaction Cleavage after basic amino-acid residues, with Arg strongly preferred to Lys.. Its function is as follows. Plays an essential role in cell growth and maintenance of cell morphology. May mediate the activating cleavage of HGF and MST1/HGFL. Plays a role in the proteolytic processing of ACE2. This chain is Serine protease hepsin (HPN), found in Pongo abelii (Sumatran orangutan).